Consider the following 292-residue polypeptide: 33 kDa chaperonin (292 aa).

Disulfide bonds link cysteine 230–cysteine 232 and cysteine 263–cysteine 266.

The protein belongs to the HSP33 family. In terms of processing, under oxidizing conditions two disulfide bonds are formed involving the reactive cysteines. Under reducing conditions zinc is bound to the reactive cysteines and the protein is inactive.

It is found in the cytoplasm. Functionally, redox regulated molecular chaperone. Protects both thermally unfolding and oxidatively damaged proteins from irreversible aggregation. Plays an important role in the bacterial defense system toward oxidative stress. In Escherichia coli O17:K52:H18 (strain UMN026 / ExPEC), this protein is 33 kDa chaperonin.